Consider the following 178-residue polypeptide: MYHQLILMALIGVIMANVVPFSMSNIPEEYKEFIPEEVKNFYKNLTQEDRQILRELASKHATFANEDAALEALKNTSDKLYQKAVELRNFVKAKIDSLKPDAKAFVDEIIAKVRSLRPEDGQKLDMEKLKQAARDIIAKYEALNEETREELKATFPNTTKIITNEKFKRIANSFLQKN.

The N-terminal stretch at 1 to 16 (MYHQLILMALIGVIMA) is a signal peptide. N-linked (GlcNAc...) asparagine glycans are attached at residues Asn-44 and Asn-75. 2 coiled-coil regions span residues 67-89 (DAAL…ELRN) and 122-154 (QKLD…LKAT). Asn-157 carries N-linked (GlcNAc...) asparagine glycosylation.

This sequence belongs to the fatty-acid and retinol-binding protein (FARBP) family. Post-translationally, N-glycosylated.

It localises to the secreted. Its function is as follows. Binds retinol and different fatty acids. This chain is Fatty-acid and retinol-binding protein 1, found in Onchocerca dukei (Filarial nematode worm).